We begin with the raw amino-acid sequence, 102 residues long: UPF0235 protein Swol_0959 (102 aa).

Belongs to the UPF0235 family.

In Syntrophomonas wolfei subsp. wolfei (strain DSM 2245B / Goettingen), this protein is UPF0235 protein Swol_0959.